Here is a 414-residue protein sequence, read N- to C-terminus: Ornithine aminotransferase (414 aa).

Cysteines 154 and 163 form a disulfide. N6-(pyridoxal phosphate)lysine is present on Lys-262.

Belongs to the class-III pyridoxal-phosphate-dependent aminotransferase family. Homodimer. It depends on pyridoxal 5'-phosphate as a cofactor. In terms of processing, the disulfide bond between Cys-154 and Cys-163 is reduced by TRX1 which increases OAT catalytic activity.

It is found in the cytoplasm. The catalysed reaction is a 2-oxocarboxylate + L-ornithine = L-glutamate 5-semialdehyde + an L-alpha-amino acid. It carries out the reaction L-ornithine + 2-oxoglutarate = L-glutamate 5-semialdehyde + L-glutamate. Its pathway is amino-acid biosynthesis; L-proline biosynthesis; L-glutamate 5-semialdehyde from L-ornithine: step 1/1. Its activity is regulated as follows. Unlike for mammalian OATs, activity is increased by TRX1-mediated reduction of the disulfide bond between Cys-154 and Cys-163. Binding to TRX1 may also induce conformational changes that facilitate substrate binding. Functionally, the enzyme has a very narrow substrate specificity and can only catalyze the transamination of alpha-ketoglutarate with ornithine or N-acetylornithine and, to a lesser extent, of glutamate-5-semialdehyde with glutamate and alanine. The protein is Ornithine aminotransferase of Plasmodium falciparum (isolate 3D7).